A 553-amino-acid chain; its full sequence is Cytokine-like nuclear factor N-PAC (553 aa).

A PWWP domain is found at 8-66 (LGDLVWGKLGRYPPWPGKIVNPPKDLKKPRGKKCFFVKFFGTEDHAWIKVEQLKPYHAH). 2 stretches are compositionally biased toward basic and acidic residues: residues 92-145 (RAKG…EGKK) and 162-182 (RAQE…KDLT). Positions 92–188 (RAKGKDQTSS…KDLTIPESST (97 aa)) are disordered. The residue at position 130 (Ser130) is a Phosphoserine. Residue Lys135 forms a Glycyl lysine isopeptide (Lys-Gly) (interchain with G-Cter in SUMO2) linkage. Ser167 carries the post-translational modification Phosphoserine. Positions 168-180 (PRKRGRPPKDEKD) form a DNA-binding region, a.T hook. Residues Lys176, Lys179, Lys201, and Lys211 each participate in a glycyl lysine isopeptide (Lys-Gly) (interchain with G-Cter in SUMO2) cross-link. The segment at 214–217 (DPHF) is interaction with histone H3. An interaction with KDM1B region spans residues 216-225 (HFHHFLLSQT). Residues Lys227, Lys237, Lys240, and Lys269 each participate in a glycyl lysine isopeptide (Lys-Gly) (interchain with G-Cter in SUMO2) cross-link. A dehydrogenase domain region spans residues 261 to 553 (GSITPTDKKI…MSAVYRAYIH (293 aa)). 271–285 (GFLGLGLMGSGIVSN) provides a ligand contact to NAD(+). A Glycyl lysine isopeptide (Lys-Gly) (interchain with G-Cter in SUMO2) cross-link involves residue Lys302. 2 residues coordinate NAD(+): Thr362 and Lys505. Ser540 carries the post-translational modification Phosphoserine.

The protein belongs to the HIBADH-related family. NP60 subfamily. As to quaternary structure, homotetramere. Interacts with MAPK14. Interacts with KDM1B at nucleosomes; this interaction stimulates H3K4me1 and H3K4me2 demethylation. Binds to mononucleosomes. Interacts with GATA4; the interaction is required for a synergistic activation of GATA4 target genes transcription.

It is found in the nucleus. The protein resides in the chromosome. In terms of biological role, cytokine-like nuclear factor with chromatin gene reader activity involved in chromatin modification and regulation of gene expression. Acts as a nucleosome-destabilizing factor that is recruited to genes during transcriptional activation. Recognizes and binds histone H3 without a preference for specific epigenetic markers and also binds DNA. Interacts with KDM1B and promotes its histone demethylase activity by facilitating the capture of H3 tails, they form a multifunctional enzyme complex that modifies transcribed chromatin and facilitates Pol II transcription through nucleosomes. Stimulates the acetylation of 'Lys-56' of nucleosomal histone H3 (H3K56ac) by EP300. With GATA4, co-binds a defined set of heart development genes and coregulates their expression during cardiomyocyte differentiation. Regulates p38 MAP kinase activity by mediating stress activation of MAPK14/p38alpha and specifically regulating MAPK14 signaling. Indirectly promotes phosphorylation of MAPK14 and activation of ATF2. The phosphorylation of MAPK14 requires upstream activity of MAP2K4 and MAP2K6. The protein is Cytokine-like nuclear factor N-PAC (GLYR1) of Pongo abelii (Sumatran orangutan).